The following is a 384-amino-acid chain: Dual specificity protein phosphatase 5 (384 aa).

One can recognise a Rhodanese domain in the interval 19-141 (AAARCVVLDC…FYSEYPECCV (123 aa)). The Nuclear localization signal motif lies at 53-74 (RRARGGAVSARYVLPDEAARAR). The Tyrosine-protein phosphatase domain maps to 178–319 (GPVEILPFLY…LLQYESEILP (142 aa)). The active-site Phosphocysteine intermediate is the cysteine 263.

The protein belongs to the protein-tyrosine phosphatase family. Non-receptor class dual specificity subfamily.

The protein localises to the nucleus. It catalyses the reaction O-phospho-L-tyrosyl-[protein] + H2O = L-tyrosyl-[protein] + phosphate. The catalysed reaction is O-phospho-L-seryl-[protein] + H2O = L-seryl-[protein] + phosphate. It carries out the reaction O-phospho-L-threonyl-[protein] + H2O = L-threonyl-[protein] + phosphate. Its function is as follows. Dual specificity protein phosphatase; active with phosphotyrosine, phosphoserine and phosphothreonine residues. The highest relative activity is toward ERK1. This is Dual specificity protein phosphatase 5 (DUSP5) from Homo sapiens (Human).